Consider the following 705-residue polypeptide: Complement C1r subcomponent (705 aa).

The first 17 residues, 1–17, serve as a signal peptide directing secretion; the sequence is MWLLYLLVPALFCRAGG. The CUB 1 domain maps to 18-141; it reads SIPIPQKLFG…KGFLAYYQAV (124 aa). 3 residues coordinate Ca(2+): Glu-66, Asp-74, and Asp-119. Cys-71 and Cys-89 are disulfide-bonded. Asn-125 carries N-linked (GlcNAc...) asparagine glycosylation. Residues Asp-142, Leu-143, and Glu-145 each contribute to the Ca(2+) site. Positions 142 to 190 constitute an EGF-like; calcium-binding domain; sequence DLDECASRSKSGEEDPQPQCQHLCHNYVGGYFCSCRPGYELQEDTHSCQ. Cystine bridges form between Cys-146–Cys-165, Cys-161–Cys-174, Cys-176–Cys-189, and Cys-193–Cys-220. Residues Asn-167, Tyr-168, and Gly-171 each contribute to the Ca(2+) site. Asn-167 is subject to (3R)-3-hydroxyasparagine. The region spanning 193 to 305 is the CUB 2 domain; it reads CSSELYTEAS…RGWKLRYTTE (113 aa). Ser-206 is subject to Phosphoserine; by CK2. Asn-221 carries N-linked (GlcNAc...) asparagine glycosylation. Ca(2+) is bound by residues Asp-243, Asp-253, Asp-290, and Asp-294. An intrachain disulfide couples Cys-250 to Cys-268. Sushi domains lie at 307–373 and 374–449; these read IKCP…RCKI and KDCG…RCLP. 5 disulfides stabilise this stretch: Cys-309–Cys-358, Cys-338–Cys-371, Cys-376–Cys-429, Cys-406–Cys-447, and Cys-451–Cys-577. A Peptidase S1 domain is found at 464–702; sequence IIGGQKAKMG…YVDWIKKEME (239 aa). His-502 (charge relay system) is an active-site residue. Asn-514 carries an N-linked (GlcNAc...) asparagine glycan. The active-site Charge relay system is Asp-557. Asn-581 is a glycosylation site (N-linked (GlcNAc...) asparagine). 2 cysteine pairs are disulfide-bonded: Cys-620-Cys-639 and Cys-650-Cys-680. Ser-654 (charge relay system) is an active-site residue.

It belongs to the peptidase S1 family. Core component of the complement C1 complex, a calcium-dependent complex composed of 1 molecule of the C1Q subcomplex, 2 molecules of C1R and 2 molecules of C1S. The C1Q subcomplex is composed 18 subunits: 3 chains of C1QA, C1QB, and C1QC trimerize to form 6 collagen-like triple helices connected to six globular ligand-recognition modules. Within the C1 complex, C1R is a dimer of identical chains, each of which is activated by cleavage into two chains, heavy and light, connected by disulfide bonds. In terms of processing, cleaved and activated by autocatalytic processing to generate Complement C1r subcomponent heavy and light chains that are connected by disulfide bonds. Post-translationally, the iron and 2-oxoglutarate dependent 3-hydroxylation of aspartate and asparagine is (R) stereospecific within EGF domains.

It is found in the secreted. The protein resides in the cell surface. It carries out the reaction Selective cleavage of Lys(or Arg)-|-Ile bond in complement subcomponent C1s to form the active form of C1s (EC 3.4.21.42).. With respect to regulation, activated by the C1Q subcomplex of the C1 complex following C1Q binding to immunoglobulins (IgG or IgM) complexed with antigens to form antigen-antibody complexes on the surface of pathogens. Immunoglobulin-binding promotes autoactivation of C1R, which results in the cleavage of the Arg-Ile bond in the catalytic domain. Serine protease component of the complement C1 complex, a multiprotein complex that initiates the classical pathway of the complement system, a cascade of proteins that leads to phagocytosis and breakdown of pathogens and signaling that strengthens the adaptive immune system. C1R catalyzes the first enzymatic step in the classical complement pathway: it is activated by the C1Q subcomplex of the C1 complex, which associates with IgG or IgM immunoglobulins complexed with antigens to form antigen-antibody complexes on the surface of pathogens. Immunoglobulin-binding promotes the autocatalytic cleavage and activation of C1R. Activated C1R then cleaves and activates C1S, the second protease of the classical complement pathway. It is unclear if C1R activates C1S within single, strained C1 complexes or between neighboring C1 complexes on surfaces. This Homo sapiens (Human) protein is Complement C1r subcomponent.